Consider the following 224-residue polypeptide: Phosphoribosylformylglycinamidine synthase subunit PurQ (224 aa).

In terms of domain architecture, Glutamine amidotransferase type-1 spans 3–224 (FGVVVFPGSN…GLLEKVVALA (222 aa)). The Nucleophile role is filled by cysteine 86. Active-site residues include histidine 195 and glutamate 197.

Part of the FGAM synthase complex composed of 1 PurL, 1 PurQ and 2 PurS subunits.

The protein resides in the cytoplasm. It catalyses the reaction N(2)-formyl-N(1)-(5-phospho-beta-D-ribosyl)glycinamide + L-glutamine + ATP + H2O = 2-formamido-N(1)-(5-O-phospho-beta-D-ribosyl)acetamidine + L-glutamate + ADP + phosphate + H(+). The catalysed reaction is L-glutamine + H2O = L-glutamate + NH4(+). It participates in purine metabolism; IMP biosynthesis via de novo pathway; 5-amino-1-(5-phospho-D-ribosyl)imidazole from N(2)-formyl-N(1)-(5-phospho-D-ribosyl)glycinamide: step 1/2. Its function is as follows. Part of the phosphoribosylformylglycinamidine synthase complex involved in the purines biosynthetic pathway. Catalyzes the ATP-dependent conversion of formylglycinamide ribonucleotide (FGAR) and glutamine to yield formylglycinamidine ribonucleotide (FGAM) and glutamate. The FGAM synthase complex is composed of three subunits. PurQ produces an ammonia molecule by converting glutamine to glutamate. PurL transfers the ammonia molecule to FGAR to form FGAM in an ATP-dependent manner. PurS interacts with PurQ and PurL and is thought to assist in the transfer of the ammonia molecule from PurQ to PurL. The polypeptide is Phosphoribosylformylglycinamidine synthase subunit PurQ (Trichormus variabilis (strain ATCC 29413 / PCC 7937) (Anabaena variabilis)).